We begin with the raw amino-acid sequence, 111 residues long: uncharacterized protein (111 aa).

A helical transmembrane segment spans residues 64-86 (VLCWLVLPLYCCNLLNLFFNIFL).

The protein localises to the membrane. This is an uncharacterized protein from Saccharomyces cerevisiae (strain ATCC 204508 / S288c) (Baker's yeast).